Consider the following 318-residue polypeptide: Porphobilinogen deaminase (318 aa).

Cys241 is subject to S-(dipyrrolylmethanemethyl)cysteine.

This sequence belongs to the HMBS family. As to quaternary structure, monomer. The cofactor is dipyrromethane.

The catalysed reaction is 4 porphobilinogen + H2O = hydroxymethylbilane + 4 NH4(+). Its pathway is porphyrin-containing compound metabolism; protoporphyrin-IX biosynthesis; coproporphyrinogen-III from 5-aminolevulinate: step 2/4. In terms of biological role, tetrapolymerization of the monopyrrole PBG into the hydroxymethylbilane pre-uroporphyrinogen in several discrete steps. This chain is Porphobilinogen deaminase, found in Geobacter sulfurreducens (strain ATCC 51573 / DSM 12127 / PCA).